Consider the following 558-residue polypeptide: Protein NRT1/ PTR FAMILY 2.3 (558 aa).

12 helical membrane passes run 33–53 (TLLG…VFLI), 69–89 (VANG…DSFF), 92–112 (IPVI…LTLI), 128–148 (VLCT…LALV), 176–196 (FFNW…TAIV), 203–223 (SWKL…IVFV), 329–349 (LWLS…LIVL), 371–391 (VIII…VFPM), 403–423 (LQKV…SAVV), 439–459 (VLWL…QFPA), 478–498 (SLTS…IDLI), and 517–537 (VYWL…VCSW).

It belongs to the major facilitator superfamily. Proton-dependent oligopeptide transporter (POT/PTR) (TC 2.A.17) family. Expressed in flowers, siliques and root epidermis or cortex. Detected in shoots.

It is found in the membrane. Its function is as follows. Transporter involved in a passive nitrate efflux. This is Protein NRT1/ PTR FAMILY 2.3 (NPF2.3) from Arabidopsis thaliana (Mouse-ear cress).